The sequence spans 135 residues: Large ribosomal subunit protein uL16c (135 aa).

The protein belongs to the universal ribosomal protein uL16 family. Part of the 50S ribosomal subunit.

It is found in the plastid. The protein resides in the chloroplast. This chain is Large ribosomal subunit protein uL16c, found in Nandina domestica (Heavenly bamboo).